A 236-amino-acid chain; its full sequence is NLP effector protein 3 (236 aa).

Residues 1-19 (MNLLGFLAVVALSTASVQA) form the signal peptide. A Conserved undecapeptide motif I motif is present at residues 103–113 (AIMYSWYFPKD). The Hepta-peptide GHRHDWE motif II signature appears at 120 to 126 (GHRHDWE).

This sequence belongs to the Necrosis inducing protein (NPP1) family.

It is found in the secreted. Its function is as follows. Secreted effector that contributes to virulence during infection by P.capsici. Induces distinct chlorosis at 3 days after inoculation of host C.annuum leaves, and all the chlorotic areas gradually turn brown and become moderately necrotic at 7 days after inoculation. Leads only to chlorotic areas, without necrosis at 7 days after non-host N.benthamiana leaves infection. Induces cell death in hot pepper. The polypeptide is NLP effector protein 3 (Phytophthora capsici).